Reading from the N-terminus, the 306-residue chain is Methyl-CpG-binding domain-containing protein 7 (306 aa).

Positions 1–11 (MQTRSSSSPSA) are enriched in polar residues. A disordered region spans residues 1-21 (MQTRSSSSPSANHRRETQLQI). MBD domains lie at 21–92 (IADP…QDKT), 106–171 (GVEY…RVLQ), and 172–242 (NRRG…ERLP). 3 positions are modified to asymmetric dimethylarginine: Arg-118, Arg-145, and Arg-174. The interval 163–306 (IEQQLRVLQN…AFVSLIEDRS (144 aa)) is required for interaction with PRMT11.

Interacts with PRMT11. Interacts (via C-terminus) with IDM2, but not with IDM1. Interacts with IDM3. Part of a complex made of MBD7, IDM1, IDM2 and IDM3. Methylated by PRMT11. As to expression, expressed in leaves, buds, flowers, stems, siliques, mature seeds and roots.

The protein localises to the nucleus. The protein resides in the chromosome. In terms of biological role, transcriptional regulator that binds CpG islands in promoters where the DNA is methylated at position 5 of cytosine within CpG dinucleotides. May directly affect chromatin structure by inducing intra- and inter- chromatin compaction via bridging over multiple methylated CpG sites. Acts as an anti-silencing factor that prevents DNA hypermethylation and gene repression. Requires high mCG density for binding. Recognizes preferentially mCGs located in transposable elements. Required for active DNA demethylation. Prefers to target genomic loci around chromocenters. The sequence is that of Methyl-CpG-binding domain-containing protein 7 from Arabidopsis thaliana (Mouse-ear cress).